The sequence spans 444 residues: Docking protein 3 (444 aa).

The region spanning 7-123 is the PH domain; that stretch reads PVKDGLLYQQ…WMDPICQLAF (117 aa). Residues 47–66 are disordered; the sequence is DVRDGGLGPGGDRPAGPGRR. S138 bears the Phosphoserine mark. The region spanning 157–261 is the IRS-type PTB domain; sequence EVAEFPVVVQ…ARQRERLPEL (105 aa). Phosphoserine occurs at positions 274, 308, and 314. Y325 bears the Phosphotyrosine mark. A disordered region spans residues 354–390; that stretch reads GLSNGGPEAQEGPPGGRSPLGSPIYHNSEELSWPGSA. A compositionally biased stretch (low complexity) spans 358–376; sequence GGPEAQEGPPGGRSPLGSP. S371 carries the phosphoserine modification.

It belongs to the DOK family. Type A subfamily. As to quaternary structure, on tyrosine phosphorylation, interacts with CSK and INPP5D/SHIP1 via their SH2 domains. Binds ABL1 through the PTB domain and in a kinase-dependent manner. Does not interact with RasGAP. Constitutively tyrosine-phosphorylated. In terms of processing, on IL2 stimulation, phosphorylated on C-terminal tyrosine residues possibly by Src kinases. Can also be phosphorylated by ABL1 kinase.

It is found in the cytoplasm. It localises to the cell membrane. Functionally, DOK proteins are enzymatically inert adaptor or scaffolding proteins. They provide a docking platform for the assembly of multimolecular signaling complexes. DOK3 is a negative regulator of JNK signaling in B-cells through interaction with INPP5D/SHIP1. May modulate ABL1 function. The protein is Docking protein 3 (Dok3) of Rattus norvegicus (Rat).